Consider the following 480-residue polypeptide: Glutamate--tRNA ligase (480 aa).

The 'HIGH' region signature appears at 8-18 (PSPTGPLHIGG). The 'KMSKS' region signature appears at 249-253 (KMSKR). ATP is bound at residue Lys-252.

This sequence belongs to the class-I aminoacyl-tRNA synthetase family. Glutamate--tRNA ligase type 1 subfamily. As to quaternary structure, monomer.

Its subcellular location is the cytoplasm. The catalysed reaction is tRNA(Glu) + L-glutamate + ATP = L-glutamyl-tRNA(Glu) + AMP + diphosphate. Catalyzes the attachment of glutamate to tRNA(Glu) in a two-step reaction: glutamate is first activated by ATP to form Glu-AMP and then transferred to the acceptor end of tRNA(Glu). The polypeptide is Glutamate--tRNA ligase (Carboxydothermus hydrogenoformans (strain ATCC BAA-161 / DSM 6008 / Z-2901)).